Here is a 429-residue protein sequence, read N- to C-terminus: Adenylosuccinate synthetase (429 aa).

GTP contacts are provided by residues 12–18 (GDEGKGK) and 40–42 (GHT). Asp-13 (proton acceptor) is an active-site residue. Mg(2+)-binding residues include Asp-13 and Gly-40. IMP is bound by residues 13–16 (DEGK), 38–41 (NAGH), Thr-128, Arg-142, Gln-223, Thr-238, and Arg-302. The Proton donor role is filled by His-41. 298–304 (TVTGRPR) contacts substrate. GTP contacts are provided by residues Arg-304, 330 to 332 (LLD), and 412 to 414 (SVG).

Belongs to the adenylosuccinate synthetase family. Homodimer. Mg(2+) serves as cofactor.

It is found in the cytoplasm. It carries out the reaction IMP + L-aspartate + GTP = N(6)-(1,2-dicarboxyethyl)-AMP + GDP + phosphate + 2 H(+). It participates in purine metabolism; AMP biosynthesis via de novo pathway; AMP from IMP: step 1/2. Functionally, plays an important role in the de novo pathway of purine nucleotide biosynthesis. Catalyzes the first committed step in the biosynthesis of AMP from IMP. This Lactobacillus acidophilus (strain ATCC 700396 / NCK56 / N2 / NCFM) protein is Adenylosuccinate synthetase.